A 414-amino-acid chain; its full sequence is Multifunctional CCA protein (414 aa).

Positions 8 and 11 each coordinate ATP. 2 residues coordinate CTP: Gly-8 and Arg-11. Mg(2+)-binding residues include Glu-21 and Asp-23. Residues Arg-91, Arg-137, and Arg-140 each coordinate ATP. The CTP site is built by Arg-91, Arg-137, and Arg-140. The 102-residue stretch at Thr-228–Trp-329 folds into the HD domain.

It belongs to the tRNA nucleotidyltransferase/poly(A) polymerase family. Bacterial CCA-adding enzyme type 1 subfamily. Monomer. Can also form homodimers and oligomers. Mg(2+) serves as cofactor. Ni(2+) is required as a cofactor.

The catalysed reaction is a tRNA precursor + 2 CTP + ATP = a tRNA with a 3' CCA end + 3 diphosphate. It catalyses the reaction a tRNA with a 3' CCA end + 2 CTP + ATP = a tRNA with a 3' CCACCA end + 3 diphosphate. Its function is as follows. Catalyzes the addition and repair of the essential 3'-terminal CCA sequence in tRNAs without using a nucleic acid template. Adds these three nucleotides in the order of C, C, and A to the tRNA nucleotide-73, using CTP and ATP as substrates and producing inorganic pyrophosphate. tRNA 3'-terminal CCA addition is required both for tRNA processing and repair. Also involved in tRNA surveillance by mediating tandem CCA addition to generate a CCACCA at the 3' terminus of unstable tRNAs. While stable tRNAs receive only 3'-terminal CCA, unstable tRNAs are marked with CCACCA and rapidly degraded. The protein is Multifunctional CCA protein of Yersinia enterocolitica serotype O:8 / biotype 1B (strain NCTC 13174 / 8081).